The following is a 103-amino-acid chain: Glycoprotein 24B (103 aa).

It belongs to the csb family. O-glycosylated.

Its subcellular location is the cell surface. Cell-cell adhesion during early development. The chain is Glycoprotein 24B (csbB) from Dictyostelium discoideum (Social amoeba).